The primary structure comprises 791 residues: Protein FAM47A (791 aa).

Disordered regions lie at residues 195 to 257, 274 to 409, and 449 to 573; these read PVSH…TRRR, EDAR…TGVC, and VKKT…SEPP. 2 stretches are compositionally biased toward basic and acidic residues: residues 274–288 and 333–342; these read EDAR…KTTD and GESHLRLEHS. Polar residues predominate over residues 349–358; it reads SLRSEPSETG. Residues 449–462 are compositionally biased toward basic and acidic residues; the sequence is VKKTKEPTEPHKSP.

Belongs to the FAM47 family.

The sequence is that of Protein FAM47A (FAM47A) from Homo sapiens (Human).